A 197-amino-acid polypeptide reads, in one-letter code: Probable GTP-binding protein EngB (197 aa).

The EngB-type G domain maps to 22–195 (NLPEIAFVGR…VDYLFDDLVE (174 aa)). GTP contacts are provided by residues 30–37 (GRSNVGKS), 57–61 (GKTRL), 75–78 (DLPG), 142–145 (TKSD), and 174–176 (FSS). Mg(2+) is bound by residues S37 and T59.

The protein belongs to the TRAFAC class TrmE-Era-EngA-EngB-Septin-like GTPase superfamily. EngB GTPase family. Mg(2+) serves as cofactor.

Its function is as follows. Necessary for normal cell division and for the maintenance of normal septation. This is Probable GTP-binding protein EngB from Clostridium perfringens (strain SM101 / Type A).